The sequence spans 249 residues: Cysteine desulfuration protein SufE (249 aa).

The active-site Cysteine persulfide intermediate is Cys-154.

Belongs to the SufE family. In terms of assembly, monomer. Interacts with SufS; interaction enhances cysteine desulfurase activity of SufS. Post-translationally, proteolytically cleaved.

It is found in the plastid. It localises to the apicoplast. It functions in the pathway cofactor biosynthesis; iron-sulfur cluster biosynthesis. Its function is as follows. Participates in sulfur mobilization (SUF) pathway for iron-sulfur (Fe-S) cluster biogenesis. Enhances cysteine desulfurase activity of SufS. Probably functions as a sulfur acceptor for SufS. This chain is Cysteine desulfuration protein SufE, found in Plasmodium falciparum (isolate 3D7).